A 1051-amino-acid polypeptide reads, in one-letter code: Helicase POLQ-like (1051 aa).

Residues 1–10 (MANKHNLCKK) are compositionally biased toward basic residues. Disordered stretches follow at residues 1–28 (MANK…AKRQ) and 61–112 (LFGT…APTD). Polar residues-rich tracts occupy residues 64–78 (TQAT…QSGS) and 89–102 (SFPS…NSAS). Residues 103 to 112 (KPDEASAPTD) are compositionally biased toward basic and acidic residues. One can recognise a Helicase ATP-binding domain in the interval 274–446 (LPAIRQRKNL…FLNADVYTRG (173 aa)). 287-294 (LPTSGGKT) contacts ATP. A DEAH box motif is present at residues 391–394 (DELH). Residues 497-689 (HLAGLISECA…NEAVGLQSLI (193 aa)) form the Helicase C-terminal domain.

Belongs to the helicase family. SKI2 subfamily.

Its subcellular location is the nucleus. The protein localises to the chromosome. The catalysed reaction is Couples ATP hydrolysis with the unwinding of duplex DNA by translocating in the 3'-5' direction.. The enzyme catalyses ATP + H2O = ADP + phosphate + H(+). Its function is as follows. Single-stranded 3'-5' DNA helicase that plays a key role in homology-driven double-strand break (DSB) repair. Involved in different DSB repair mechanisms that are guided by annealing of extensive stretches of complementary bases at break ends, such as microhomology-mediated end-joining (MMEJ), single-strand annealing (SSA) or synthesis-dependent strand annealing (SDSA). This Drosophila melanogaster (Fruit fly) protein is Helicase POLQ-like.